Consider the following 382-residue polypeptide: Na(+)/H(+) antiporter NhaA (382 aa).

10 consecutive transmembrane segments (helical) span residues 5-25 (INLLREFSVPLIAGVITALAW), 42-62 (FGGVSLHFLVNELFMVLFFGI), 88-108 (LATLGGVIGPVLVYLSLNAVI), 116-136 (GWGIPTATDIALAWLVARLVF), 145-165 (FLLLLAVADDAIGLAIIAVFY), 169-189 (VHPTEPMWLFLTVAGIVAAYI), 261-281 (IVVDFGLFLFGLANAGVRFSS), 282-302 (VGTATWLVLTALLVGKTAGIL), 327-347 (TGLVAGMGLTVALFVAGVAFV), and 353-373 (GAAKMGALLSGGVLPVAVALG).

It belongs to the NhaA Na(+)/H(+) (TC 2.A.33) antiporter family.

The protein localises to the cell inner membrane. It carries out the reaction Na(+)(in) + 2 H(+)(out) = Na(+)(out) + 2 H(+)(in). Na(+)/H(+) antiporter that extrudes sodium in exchange for external protons. The sequence is that of Na(+)/H(+) antiporter NhaA from Geobacter metallireducens (strain ATCC 53774 / DSM 7210 / GS-15).